The chain runs to 231 residues: uncharacterized protein (231 aa).

The 117-residue stretch at 3–119 folds into the RCK N-terminal domain; the sequence is RADFCIIGLG…RTMGIREALI (117 aa). Residues 134–221 form the RCK C-terminal domain; sequence HGMETEIINL…VNQYLRYINP (88 aa).

This is an uncharacterized protein from Mycoplasma pneumoniae (strain ATCC 29342 / M129 / Subtype 1) (Mycoplasmoides pneumoniae).